We begin with the raw amino-acid sequence, 629 residues long: tRNA uridine 5-carboxymethylaminomethyl modification enzyme MnmG (629 aa).

FAD-binding positions include 13-18, Val-125, and Ser-180; that span reads GGGHAG. NAD(+) is bound at residue 273–287; sequence GPRYCPSIEDKVMRF. Position 370 (Gln-370) interacts with FAD.

It belongs to the MnmG family. Homodimer. Heterotetramer of two MnmE and two MnmG subunits. Requires FAD as cofactor.

The protein localises to the cytoplasm. Functionally, NAD-binding protein involved in the addition of a carboxymethylaminomethyl (cmnm) group at the wobble position (U34) of certain tRNAs, forming tRNA-cmnm(5)s(2)U34. This Citrobacter koseri (strain ATCC BAA-895 / CDC 4225-83 / SGSC4696) protein is tRNA uridine 5-carboxymethylaminomethyl modification enzyme MnmG.